We begin with the raw amino-acid sequence, 582 residues long: Trans-ocimene synthase, chloroplastic (582 aa).

The transit peptide at methionine 1–glutamine 35 directs the protein to the chloroplast. Positions 296, 333, 337, 474, and 477 each coordinate (2E)-geranyl diphosphate. The Mg(2+) site is built by aspartate 333 and aspartate 337. A DDXXD motif motif is present at residues aspartate 333 to aspartate 337. The Mg(2+) site is built by aspartate 477, threonine 481, and glutamate 485.

This sequence belongs to the terpene synthase family. Tpsb subfamily. Monomer. The cofactor is Mg(2+). Mn(2+) is required as a cofactor. Expressed in male and female leaves. Barely detectable in fruits and shoots.

It localises to the plastid. The protein localises to the chloroplast. The enzyme catalyses (2E)-geranyl diphosphate = (E)-beta-ocimene + diphosphate. It participates in secondary metabolite biosynthesis; terpenoid biosynthesis. Functionally, monoterpene synthase (TPS) involved in the biosynthesis of monoterpene natural products used by traditional Chinese medicine to treat headache, inflammation and intoxication. Catalyzes the conversion of (2E)-geranyl diphosphate (GPP) into (E)-beta-ocimene. The polypeptide is Trans-ocimene synthase, chloroplastic (Litsea cubeba (Aromatic litsea)).